The sequence spans 428 residues: GTPase Obg (428 aa).

One can recognise an Obg domain in the interval 1–158; that stretch reads MFVDQVKIYV…RDVILELKVL (158 aa). The 171-residue stretch at 159–329 folds into the OBG-type G domain; that stretch reads ADVGLVGFPS…LLFEVANLIE (171 aa). Residues 165 to 172, 190 to 194, 212 to 215, 282 to 285, and 310 to 312 each bind GTP; these read GFPSVGKS, FTTIV, DLPG, NKMD, and SAV. Residues S172 and T192 each contribute to the Mg(2+) site. Residues 350–428 form the OCT domain; the sequence is KFETEGVKFD…ILEYEFEFID (79 aa).

The protein belongs to the TRAFAC class OBG-HflX-like GTPase superfamily. OBG GTPase family. As to quaternary structure, monomer. It depends on Mg(2+) as a cofactor.

It is found in the cytoplasm. An essential GTPase which binds GTP, GDP and possibly (p)ppGpp with moderate affinity, with high nucleotide exchange rates and a fairly low GTP hydrolysis rate. Plays a role in control of the cell cycle, stress response, ribosome biogenesis and in those bacteria that undergo differentiation, in morphogenesis control. In Bacillus thuringiensis (strain Al Hakam), this protein is GTPase Obg.